A 398-amino-acid polypeptide reads, in one-letter code: S-adenosylmethionine synthase (398 aa).

An ATP-binding site is contributed by H16. D18 serves as a coordination point for Mg(2+). E51 contributes to the K(+) binding site. 2 residues coordinate L-methionine: E64 and Q108. The segment at 108–118 (QSADIAQGVDA) is flexible loop. Residues 176–178 (DSK), 242–243 (KF), D251, 257–258 (RK), A274, and K278 each bind ATP. Residue D251 participates in L-methionine binding. K282 contributes to the L-methionine binding site.

The protein belongs to the AdoMet synthase family. Homotetramer; dimer of dimers. Mg(2+) serves as cofactor. K(+) is required as a cofactor.

It is found in the cytoplasm. It carries out the reaction L-methionine + ATP + H2O = S-adenosyl-L-methionine + phosphate + diphosphate. The protein operates within amino-acid biosynthesis; S-adenosyl-L-methionine biosynthesis; S-adenosyl-L-methionine from L-methionine: step 1/1. In terms of biological role, catalyzes the formation of S-adenosylmethionine (AdoMet) from methionine and ATP. The overall synthetic reaction is composed of two sequential steps, AdoMet formation and the subsequent tripolyphosphate hydrolysis which occurs prior to release of AdoMet from the enzyme. This is S-adenosylmethionine synthase from Rhodopseudomonas palustris (strain HaA2).